Reading from the N-terminus, the 402-residue chain is Tryptophan--tRNA ligase, cytoplasmic (402 aa).

The 'HIGH' region signature appears at 97–106 (PSSEALHLGH). Positions 280–284 (KMSAS) match the 'KMSKS' region motif.

It belongs to the class-I aminoacyl-tRNA synthetase family.

Its subcellular location is the cytoplasm. It localises to the cytosol. It catalyses the reaction tRNA(Trp) + L-tryptophan + ATP = L-tryptophyl-tRNA(Trp) + AMP + diphosphate + H(+). The polypeptide is Tryptophan--tRNA ligase, cytoplasmic (Arabidopsis thaliana (Mouse-ear cress)).